Here is a 419-residue protein sequence, read N- to C-terminus: NF-kappa-B essential modulator (419 aa).

The interval 1-197 (MNRHLWKSQL…REALQQQHSV (197 aa)) is required for interaction with and ubiquitination by MARCHF2. Phosphoserine; by IKKB occurs at positions 31 and 43. Residues 44–111 (EQGAPETLQR…KLVERLGLEK (68 aa)) are interaction with CHUK/IKBKB. Residues 49-356 (ETLQRCLEEN…CQESARIEDM (308 aa)) are a coiled coil. S68 carries the post-translational modification Phosphoserine. S85 carries the phosphoserine; by ATM modification. Glycyl lysine isopeptide (Lys-Gly) (interchain with G-Cter in ubiquitin) cross-links involve residues K111, K139, K143, K226, K246, and K264. Positions 150–257 (LGELQESQSR…SVVGSERKRG (108 aa)) are interaction with TANK. Residues 242-350 (DNHIKSSVVG…SKLKASCQES (109 aa)) are ubiquitin-binding (UBAN). Positions 246 to 365 (KSSVVGSERK…MRKRHVEVSQ (120 aa)) are self-association. A required for interaction with TNFAIP3 region spans residues 251–419 (GSERKRGMQL…LQIHVMECIE (169 aa)). Residue K277 forms a Glycyl lysine isopeptide (Lys-Gly) (interchain with G-Cter in SUMO); alternate linkage. K277 is covalently cross-linked (Glycyl lysine isopeptide (Lys-Gly) (interchain with G-Cter in ubiquitin); alternate). Glycyl lysine isopeptide (Lys-Gly) (interchain with G-Cter in ubiquitin) cross-links involve residues K283, K285, K292, and K302. K309 participates in a covalent cross-link: Glycyl lysine isopeptide (Lys-Gly) (interchain with G-Cter in SUMO); alternate. Residue K309 forms a Glycyl lysine isopeptide (Lys-Gly) (interchain with G-Cter in ubiquitin); alternate linkage. Residues K321 and K325 each participate in a glycyl lysine isopeptide (Lys-Gly) (interchain with G-Cter in ubiquitin) cross-link. Residues 322–343 (LAEKKELLQEQLEQLQREYSKL) form a leucine-zipper region. A Glycyl lysine isopeptide (Lys-Gly) (interchain with G-Cter in ubiquitin and interchain with MARCHF2) cross-link involves residue K326. A disordered region spans residues 358-395 (KRHVEVSQAPLPPAPAYLSSPLALPSQRRSPPEEPPDF). The span at 373–386 (AYLSSPLALPSQRR) shows a compositional bias: low complexity. S376 is modified (phosphoserine; by IKKB). Residues 382–419 (PSQRRSPPEEPPDFCCPKCQYQAPDMDTLQIHVMECIE) form an interaction with CYLD region. Residue S387 is modified to Phosphoserine. The segment at 389 to 419 (PEEPPDFCCPKCQYQAPDMDTLQIHVMECIE) adopts a CCHC NOA-type zinc-finger fold. Zn(2+) is bound at residue C397. A Glycyl lysine isopeptide (Lys-Gly) (interchain with G-Cter in ubiquitin) cross-link involves residue K399. Residues C400, H413, and C417 each contribute to the Zn(2+) site.

In terms of assembly, homodimer; disulfide-linked. Component of the I-kappa-B-kinase (IKK) core complex consisting of CHUK, IKBKB and IKBKG; probably four alpha/CHUK-beta/IKBKB dimers are associated with four gamma/IKBKG subunits. The IKK core complex seems to associate with regulatory or adapter proteins to form a IKK-signalosome holo-complex. The IKK complex associates with TERF2IP/RAP1, leading to promote IKK-mediated phosphorylation of RELA/p65. Part of a complex composed of NCOA2, NCOA3, CHUK/IKKA, IKBKB, IKBKG and CREBBP. Interacts with COPS3, CYLD, NALP2, TRPC4AP and PIDD1. Interacts with ATM; the complex is exported from the nucleus. Interacts with TRAF6. Interacts with IKBKE. Interacts with TANK; the interaction is enhanced by IKBKE and TBK1. Part of a ternary complex consisting of TANK, IKBKB and IKBKG. Interacts with ZFAND5. Interacts with RIPK2. Interacts with TNIP1 and TNFAIP3; TNIP1 facilitates the TNFAIP3-mediated de-ubiquitination of IKBKG. Interacts with TNFAIP3; the interaction is induced by TNF stimulation and by polyubiquitin. Binds (via UBAN region) polyubiquitin; binds both 'Lys-63'-linked and linear polyubiquitin, with higher affinity for linear ubiquitin. Interacts with NLRP10. Interacts with TANK; this interaction increases in response to DNA damage. Interacts with USP10; this interaction increases in response to DNA damage. Interacts with ZC3H12A; this interaction increases in response to DNA damage. Interacts with IFIT5; the interaction synergizes the recruitment of IKK to MAP3K7 and enhances IKK phosphorylation. Interacts with TRIM29; this interaction induces IKBKG/NEMO ubiquitination and proteolytic degradation. Interacts with TRIM13; this interaction leads to IKBKG/NEMO ubiquitination. Interacts with ARFIP2. Interacts with RIPK1. Interacts with (ubiquitinated) BCL10; interaction with polyubiquitinated BCL10 via both 'Lys-63'-linked and linear ubiquitin is required for TCR-induced NF-kappa-B activation. Interacts with MARCHF2; during the late stages of macrophage viral and bacterial infection; the interaction leads to ubiquitination and degradation of IKBKG/NEMO. (Microbial infection) Interacts with Molluscum contagiosum virus protein MC005; this interaction inhibits NF-kappa-B activation. As to quaternary structure, (Microbial infection) Interacts with HTLV-1 Tax oncoprotein; the interaction activates IKBKG. In terms of assembly, (Microbial infection) Interacts with Shigella flexneri ipah9.8; the interaction promotes TNIP1-dependent 'Lys-27'-linked polyubiquitination of IKBKG which perturbs NF-kappa-B activation during bacterial infection. (Microbial infection) Interacts with SARS coronavirus-2/SARS-CoV-2 virus protein ORF9B (via N-terminus); the interaction inhibits polyubiquitination through 'Lys-63' and NF-kappa-B activation. Post-translationally, phosphorylation at Ser-68 attenuates aminoterminal homodimerization. Polyubiquitinated on Lys-285 via 'Lys-63'-linked ubiquitin; the ubiquitination is mediated downstream of NOD2 and RIPK2 and probably plays a role in signaling by facilitating interactions with ubiquitin domain-containing proteins and activates the NF-kappa-B pathway. Polyubiquitinated on Lys-285 and Lys-399 through 'Lys-63'-linked ubiquitin; the ubiquitination is mediated by BCL10, MALT1 and TRAF6 and probably plays a role in signaling by facilitating interactions with ubiquitin domain-containing proteins and activates the NF-kappa-B pathway. Monoubiquitinated on Lys-277 and Lys-309; promotes nuclear export. Polyubiquitinated through 'Lys-27' by TRIM23; involved in antiviral innate and inflammatory responses. Linear polyubiquitinated on Lys-111, Lys-143, Lys-226, Lys-246, Lys-264, Lys-277, Lys-285, Lys-292, Lys-302, Lys-309 and Lys-326; the head-to-tail polyubiquitination is mediated by the LUBAC complex and plays a key role in NF-kappa-B activation. Deubiquitinated by USP10 in a TANK-dependent and -independent manner, leading to the negative regulation of NF-kappa-B signaling upon DNA damage. Ubiquitinated at Lys-326 by MARCHF2 following bacterial and viral infection which leads to its degradation. Polyubiquitinated via 'Lys-29'-linked ubiquitin; leading to lysosomal degradation. In terms of processing, sumoylated on Lys-277 and Lys-309 with SUMO1; the modification results in phosphorylation of Ser-85 by ATM leading to a replacement of the sumoylation by mono-ubiquitination on these residues. Post-translationally, neddylated by TRIM40, resulting in stabilization of NFKBIA and down-regulation of NF-kappa-B activity. (Microbial infection) Cleaved by hepatitis A virus (HAV) protease 3C allowing the virus to disrupt the host innate immune signaling. In terms of processing, (Microbial infection) Deubiquitinated by Epstein-Barr virus BPLF1 on both 'Lys-48' and 'Lys-63'-linked ubiquitin chains; leading to NF-kappa-B signaling inhibition. Post-translationally, (Microbial infection) Polyubiquitinated on Lys-309 and Lys-321 via 'Lys-27'-linked ubiquitin by Shigella flexneri E3 ubiquitin-protein ligase ipah9.8, leading to its degradation by the proteasome. (Microbial infection) Polyubiquitination through 'Lys-63' is interrupted by interaction with SARS coronavirus-2/SARS-CoV-2 virus protein ORF9B which inhibits the NF-kappa-B pathway. In terms of tissue distribution, heart, brain, placenta, lung, liver, skeletal muscle, kidney and pancreas.

Its subcellular location is the cytoplasm. The protein resides in the nucleus. In terms of biological role, regulatory subunit of the IKK core complex which phosphorylates inhibitors of NF-kappa-B thus leading to the dissociation of the inhibitor/NF-kappa-B complex and ultimately the degradation of the inhibitor. Its binding to scaffolding polyubiquitin plays a key role in IKK activation by multiple signaling receptor pathways. Can recognize and bind both 'Lys-63'-linked and linear polyubiquitin upon cell stimulation, with a much higher affinity for linear polyubiquitin. Could be implicated in NF-kappa-B-mediated protection from cytokine toxicity. Essential for viral activation of IRF3. Involved in TLR3- and IFIH1-mediated antiviral innate response; this function requires 'Lys-27'-linked polyubiquitination. Functionally, (Microbial infection) Also considered to be a mediator for HTLV-1 Tax oncoprotein activation of NF-kappa-B. The polypeptide is NF-kappa-B essential modulator (Homo sapiens (Human)).